Here is a 493-residue protein sequence, read N- to C-terminus: Glutamate--tRNA ligase (493 aa).

A 'HIGH' region motif is present at residues 10–20; that stretch reads PSPTGDPHVGT. The 'KMSKS' region motif lies at 251–255; that stretch reads KLSKR. Residue K254 participates in ATP binding.

The protein belongs to the class-I aminoacyl-tRNA synthetase family. Glutamate--tRNA ligase type 1 subfamily. As to quaternary structure, monomer.

It is found in the cytoplasm. The catalysed reaction is tRNA(Glu) + L-glutamate + ATP = L-glutamyl-tRNA(Glu) + AMP + diphosphate. Functionally, catalyzes the attachment of glutamate to tRNA(Glu) in a two-step reaction: glutamate is first activated by ATP to form Glu-AMP and then transferred to the acceptor end of tRNA(Glu). This chain is Glutamate--tRNA ligase, found in Pseudomonas putida (strain ATCC 47054 / DSM 6125 / CFBP 8728 / NCIMB 11950 / KT2440).